A 417-amino-acid polypeptide reads, in one-letter code: Probable pectate lyase 20 (417 aa).

A signal peptide spans methionine 1–serine 25. N-linked (GlcNAc...) asparagine glycans are attached at residues asparagine 29 and asparagine 53. Positions 215, 239, and 243 each coordinate Ca(2+). The active site involves arginine 295.

It belongs to the polysaccharide lyase 1 family. The cofactor is Ca(2+).

It catalyses the reaction Eliminative cleavage of (1-&gt;4)-alpha-D-galacturonan to give oligosaccharides with 4-deoxy-alpha-D-galact-4-enuronosyl groups at their non-reducing ends.. The protein operates within glycan metabolism; pectin degradation; 2-dehydro-3-deoxy-D-gluconate from pectin: step 2/5. The sequence is that of Probable pectate lyase 20 from Arabidopsis thaliana (Mouse-ear cress).